We begin with the raw amino-acid sequence, 131 residues long: Fimbrial assembly protein, serogroups C1 and C2 (131 aa).

In Dichelobacter nodosus (Bacteroides nodosus), this protein is Fimbrial assembly protein, serogroups C1 and C2 (fimB).